The following is a 53-amino-acid chain: Rubredoxin (53 aa).

Residues 1–53 (MQKFECTLCGYIYDPALVGPDTPDQDGAFEDVSENWVCPLCGAGKEDFEVYED) enclose the Rubredoxin-like domain. Fe cation contacts are provided by Cys6, Cys9, Cys38, and Cys41.

This sequence belongs to the rubredoxin family. Requires Fe(3+) as cofactor.

Functionally, rubredoxin is a small nonheme, iron protein lacking acid-labile sulfide. Its single Fe, chelated to 4 Cys, functions as an electron acceptor and may also stabilize the conformation of the molecule. In Peptoniphilus asaccharolyticus (Peptostreptococcus asaccharolyticus), this protein is Rubredoxin.